The primary structure comprises 478 residues: FERM domain-containing protein B (478 aa).

Disordered regions lie at residues 19–39 (ELIP…TITS), 129–196 (EENS…GFLT), and 202–221 (KAQS…TIAS). Composition is skewed to low complexity over residues 22–39 (PTQS…TITS) and 129–164 (EENS…ANDG). The 421-residue stretch at 48-468 (VLIRIYFIDD…DWSEEWESKE (421 aa)) folds into the FERM domain. Positions 165–179 (SGSGSGSGSGSGSGS) are enriched in gly residues. 2 stretches are compositionally biased toward low complexity: residues 180–189 (GTSTPNSPKG) and 204–216 (QSPQ…SSLS).

This Dictyostelium discoideum (Social amoeba) protein is FERM domain-containing protein B (frmB).